A 422-amino-acid polypeptide reads, in one-letter code: UDP-N-acetylglucosamine 1-carboxyvinyltransferase (422 aa).

23 to 24 (KN) contributes to the phosphoenolpyruvate binding site. R92 is a UDP-N-acetyl-alpha-D-glucosamine binding site. C116 (proton donor) is an active-site residue. 2-(S-cysteinyl)pyruvic acid O-phosphothioketal is present on C116. UDP-N-acetyl-alpha-D-glucosamine is bound by residues 121–125 (RPVDL), 161–164 (KVSV), D306, and I328.

This sequence belongs to the EPSP synthase family. MurA subfamily.

It is found in the cytoplasm. It carries out the reaction phosphoenolpyruvate + UDP-N-acetyl-alpha-D-glucosamine = UDP-N-acetyl-3-O-(1-carboxyvinyl)-alpha-D-glucosamine + phosphate. It participates in cell wall biogenesis; peptidoglycan biosynthesis. Its function is as follows. Cell wall formation. Adds enolpyruvyl to UDP-N-acetylglucosamine. The sequence is that of UDP-N-acetylglucosamine 1-carboxyvinyltransferase from Aliivibrio salmonicida (strain LFI1238) (Vibrio salmonicida (strain LFI1238)).